The sequence spans 157 residues: MVHPLIPQLESLARPLAARLGYELVQMVFHTNQYPPVLRVDIRPLDPEQETSHADCEAMSQALEVELDRVDLIPGHYVLEVSSPGISNLLISDRDFVVFKGFAVEVTVDPPYKGKAVWSGHLLGRDEEKVALSLKGRRVQLPRASVQRVVLSGAETE.

This sequence belongs to the RimP family.

It is found in the cytoplasm. In terms of biological role, required for maturation of 30S ribosomal subunits. The polypeptide is Ribosome maturation factor RimP (Synechococcus sp. (strain JA-3-3Ab) (Cyanobacteria bacterium Yellowstone A-Prime)).